Consider the following 589-residue polypeptide: Aspartate--tRNA ligase (589 aa).

Glutamate 174 contacts L-aspartate. Residues 198–201 (QLFK) form an aspartate region. L-aspartate is bound at residue arginine 220. Residues 220–222 (RDE) and glutamine 229 contribute to the ATP site. Histidine 448 lines the L-aspartate pocket. An ATP-binding site is contributed by glutamate 483. Arginine 490 provides a ligand contact to L-aspartate. An ATP-binding site is contributed by 535 to 538 (GIDR).

This sequence belongs to the class-II aminoacyl-tRNA synthetase family. Type 1 subfamily. Homodimer.

The protein resides in the cytoplasm. The catalysed reaction is tRNA(Asp) + L-aspartate + ATP = L-aspartyl-tRNA(Asp) + AMP + diphosphate. Its function is as follows. Catalyzes the attachment of L-aspartate to tRNA(Asp) in a two-step reaction: L-aspartate is first activated by ATP to form Asp-AMP and then transferred to the acceptor end of tRNA(Asp). This Xylella fastidiosa (strain M12) protein is Aspartate--tRNA ligase.